The following is a 1325-amino-acid chain: Cyclic nucleotide-gated channel beta-1 (1325 aa).

Disordered stretches follow at residues 1–124 (MLGW…QVAV), 147–198 (PQPV…SLWL), 227–279 (AVLD…PGDP), 340–470 (WEDA…LDSC), 482–637 (LERT…SQNS), and 659–694 (KEKL…PAEA). Residues 1–732 (MLGWVQRVLP…SIDPLTNLMY (732 aa)) are Cytoplasmic-facing. Residues 43–81 (PQQEPEPEPEPEPEPEPEPEPEPEPEPEPEPEPVPEEAP) are compositionally biased toward acidic residues. Positions 105–121 (LQETQVADPAQPTSQAQ) are enriched in polar residues. Residues 370-379 (IPRELTKIQE) show a composition bias toward basic and acidic residues. Composition is skewed to acidic residues over residues 380–393 (ERED…EEKE), 418–463 (EEKE…EEEP), and 495–517 (LPEE…EEKK). Residues 518 to 527 (EEEVEKKEEG) are compositionally biased toward basic and acidic residues. Residues 560–571 (TLPPPERPPPSP) show a composition bias toward pro residues. Residues 633–643 (ASQNSAIINDR) form a calmodulin-binding CaM1 region. Residues 733–754 (ILWLFFVVLAWNWNCWLIPVRW) traverse the membrane as a helical segment. Residues 755 to 763 (AFPYQRADN) are Extracellular-facing. The chain crosses the membrane as a helical span at residues 764–785 (IHFWLLMDYLCDFIYLLDITVF). Topologically, residues 786–800 (QMRLQFVKGGDIITD) are cytoplasmic. A helical membrane pass occupies residues 801–820 (KKEMRNNYLKSRRFKMDLLC). The Extracellular portion of the chain corresponds to 821–836 (LLPLDFLYLKLGINPL). The chain crosses the membrane as a helical span at residues 837-849 (LRLPRCLKYMAFF). Residues 850–861 (EFNNRLEAILSK) lie on the Cytoplasmic side of the membrane. The chain crosses the membrane as a helical span at residues 862 to 884 (AYVYRVIRTTAYLLYSLHLNSCL). An ion conduction pathway region spans residues 862–961 (AYVYRVIRTT…IGQMRDVVGA (100 aa)). At 885-907 (YYWASAFQGIGSTHWVYDGVGNS) the chain is on the extracellular side. A run of 2 helical transmembrane segments spans residues 908–934 (YIRC…LFEI) and 935–960 (VFQL…DVVG). Residues 961–1325 (AATAGQTYYR…VLEEKKEGAE (365 aa)) are Cytoplasmic-facing. Residues 964-1040 (AGQTYYRSCM…SIVSKVALFQ (77 aa)) form a C-linker region. The segment at 1038-1142 (LFQGCDRQMI…LDKKDLNEIL (105 aa)) is cNMP-binding domain. The tract at residues 1044–1160 (RQMIFDMLKR…LLRKKARRML (117 aa)) is cyclic nucleotide-binding domain. Gly-1105, Glu-1106, Ser-1108, Arg-1118, and Thr-1119 together coordinate 3',5'-cyclic GMP. Arg-1118 is a binding site for 3',5'-cyclic AMP. The calmodulin-binding CaM2 stretch occupies residues 1224–1230 (QQQLLEQ). Over residues 1226–1250 (QLLEQAKSSQEAGGEEGSGATDQPA) the composition is skewed to low complexity. A disordered region spans residues 1226-1325 (QLLEQAKSSQ…VLEEKKEGAE (100 aa)). Positions 1262 to 1279 (KPPGPPEPSAQSSPPPAS) are enriched in pro residues.

The protein belongs to the cyclic nucleotide-gated cation channel (TC 1.A.1.5) family. CNGB1 subfamily. In terms of tissue distribution, rod outer segments. Olfactory sensory neurons.

Its subcellular location is the cell projection. It is found in the cilium membrane. The catalysed reaction is Ca(2+)(in) = Ca(2+)(out). It catalyses the reaction Na(+)(in) = Na(+)(out). It carries out the reaction K(+)(in) = K(+)(out). The enzyme catalyses NH4(+)(in) = NH4(+)(out). The catalysed reaction is Rb(+)(in) = Rb(+)(out). It catalyses the reaction Li(+)(in) = Li(+)(out). It carries out the reaction Cs(+)(in) = Cs(+)(out). Functionally, pore-forming subunit of the rod cyclic nucleotide-gated channel. Mediates rod photoresponses at dim light converting transient changes in intracellular cGMP levels into electrical signals. In the dark, cGMP levels are high and keep the channel open enabling a steady inward current carried by Na(+) and Ca(2+) ions that leads to membrane depolarization and neurotransmitter release from synaptic terminals. Upon photon absorption cGMP levels decline leading to channel closure and membrane hyperpolarization that ultimately slows neurotransmitter release and signals the presence of light, the end point of the phototransduction cascade. Pore-forming subunit of the olfactory cyclic nucleotide-gated channel. Operates in the cilia of olfactory sensory neurons where chemical stimulation of the odorant is converted to an electrical signal. Mediates odorant-induced cAMP-dependent Ca(2+) influx triggering neuron depolarization. The rise of intracellular Ca(2+) levels potentiates the olfactory response by activating Ca(2+)-dependent Cl(-) channels, but it also serves as a negative feedback signal to desensitize the channel for rapid adaptation to odorants. Conducts cGMP- and cAMP-gated ion currents, with permeability for monovalent and divalent cations. The selectivity for Ca(2+) over Na(+) increases with cGMP concentrations, whereas the selectivity among monovalent ions is independent of the cGMP levels. The chain is Cyclic nucleotide-gated channel beta-1 from Mus musculus (Mouse).